Reading from the N-terminus, the 876-residue chain is Alanine--tRNA ligase (876 aa).

Zn(2+) contacts are provided by His-564, His-568, Cys-666, and His-670.

The protein belongs to the class-II aminoacyl-tRNA synthetase family. In terms of assembly, homotetramer. The cofactor is Zn(2+).

It is found in the cytoplasm. It catalyses the reaction tRNA(Ala) + L-alanine + ATP = L-alanyl-tRNA(Ala) + AMP + diphosphate. Catalyzes the attachment of alanine to tRNA(Ala) in a two-step reaction: alanine is first activated by ATP to form Ala-AMP and then transferred to the acceptor end of tRNA(Ala). Also edits incorrectly charged Ser-tRNA(Ala) and Gly-tRNA(Ala) via its editing domain. This Salmonella paratyphi A (strain ATCC 9150 / SARB42) protein is Alanine--tRNA ligase.